The sequence spans 84 residues: Trefoil factor 1 (84 aa).

The N-terminal stretch at 1-24 (MATMENKVICALVLVSMLALGTLA) is a signal peptide. Positions 29-72 (ETCTVAPRERQNCGFPGVTPSQCANKGCCFDDTVRGVPWCFYPN) constitute a P-type domain. 3 cysteine pairs are disulfide-bonded: cysteine 31–cysteine 57, cysteine 41–cysteine 56, and cysteine 51–cysteine 68.

As to quaternary structure, heterodimer with GKN2; disulfide linked. As to expression, found in stomach, with highest levels in the upper gastric mucosal cells (at protein level). Detected in goblet cells of the small and large intestine and rectum, small submucosal glands in the esophagus, mucous acini of the sublingual gland, submucosal glands of the trachea, and epithelial cells lining the exocrine pancreatic ducts but not in the remainder of the pancreas (at protein level). Scattered expression is detected in the epithelial cells of the gallbladder and submucosal glands of the vagina, and weak expression is observed in the bronchial goblet cells of the pseudostratified epithelia in the respiratory system (at protein level). Detected in urine (at protein level). Strongly expressed in breast cancer but at low levels in normal mammary tissue. It is regulated by estrogen in MCF-7 cells. Strong expression found in normal gastric mucosa and in the regenerative tissues surrounding ulcerous lesions of gastrointestinal tract, but lower expression found in gastric cancer (at protein level).

The protein localises to the secreted. Stabilizer of the mucous gel overlying the gastrointestinal mucosa that provides a physical barrier against various noxious agents. May inhibit the growth of calcium oxalate crystals in urine. This is Trefoil factor 1 (TFF1) from Homo sapiens (Human).